The primary structure comprises 128 residues: Keratin-associated protein 2-1 (128 aa).

Residues 5–112 (CCGSTFSSLS…SVQSPCCRPP (108 aa)) are 10 X 5 AA repeats of C-C-[CDPQRWG]-[APRS]-[CIPSTVD].

This sequence belongs to the KRTAP type 2 family. As to quaternary structure, interacts with hair keratins.

Functionally, in the hair cortex, hair keratin intermediate filaments are embedded in an interfilamentous matrix, consisting of hair keratin-associated proteins (KRTAP), which are essential for the formation of a rigid and resistant hair shaft through their extensive disulfide bond cross-linking with abundant cysteine residues of hair keratins. The matrix proteins include the high-sulfur and high-glycine-tyrosine keratins. This Homo sapiens (Human) protein is Keratin-associated protein 2-1 (KRTAP2-1).